The following is a 29-amino-acid chain: Cytochrome b6-f complex subunit 8 (29 aa).

A helical transmembrane segment spans residues 3–23 (IVDIAWAALMVVFTFSLSLVV).

It belongs to the PetN family. In terms of assembly, the 4 large subunits of the cytochrome b6-f complex are cytochrome b6, subunit IV (17 kDa polypeptide, PetD), cytochrome f and the Rieske protein, while the 4 small subunits are PetG, PetL, PetM and PetN. The complex functions as a dimer.

It is found in the plastid. The protein resides in the chloroplast thylakoid membrane. In terms of biological role, component of the cytochrome b6-f complex, which mediates electron transfer between photosystem II (PSII) and photosystem I (PSI), cyclic electron flow around PSI, and state transitions. This chain is Cytochrome b6-f complex subunit 8, found in Gnetum parvifolium (Small-leaved jointfir).